The following is a 1203-amino-acid chain: DNA-directed RNA polymerase subunit beta (1203 aa).

Positions alanine 1174–alanine 1195 are enriched in basic and acidic residues. Residues alanine 1174–glutamate 1203 are disordered.

The protein belongs to the RNA polymerase beta chain family. In terms of assembly, the RNAP catalytic core consists of 2 alpha, 1 beta, 1 beta' and 1 omega subunit. When a sigma factor is associated with the core the holoenzyme is formed, which can initiate transcription.

The enzyme catalyses RNA(n) + a ribonucleoside 5'-triphosphate = RNA(n+1) + diphosphate. In terms of biological role, DNA-dependent RNA polymerase catalyzes the transcription of DNA into RNA using the four ribonucleoside triphosphates as substrates. The chain is DNA-directed RNA polymerase subunit beta from Streptococcus pneumoniae (strain P1031).